Reading from the N-terminus, the 378-residue chain is Alanine racemase (378 aa).

The active-site Proton acceptor; specific for D-alanine is the K40. Residue K40 is modified to N6-(pyridoxal phosphate)lysine. Substrate is bound at residue R140. Residue Y270 is the Proton acceptor; specific for L-alanine of the active site. Substrate is bound at residue M317.

This sequence belongs to the alanine racemase family. Requires pyridoxal 5'-phosphate as cofactor.

The catalysed reaction is L-alanine = D-alanine. It functions in the pathway amino-acid biosynthesis; D-alanine biosynthesis; D-alanine from L-alanine: step 1/1. In terms of biological role, catalyzes the interconversion of L-alanine and D-alanine. May also act on other amino acids. In Lacticaseibacillus casei (strain BL23) (Lactobacillus casei), this protein is Alanine racemase (alr).